Reading from the N-terminus, the 461-residue chain is Glycine--tRNA ligase (461 aa).

Substrate-binding residues include arginine 100 and glutamate 163. ATP-binding positions include 195–197, 205–210, 282–283, and 326–329; these read RNE, FRTREF, EL, and GLGR. A substrate-binding site is contributed by 210 to 214; it reads FEQME. 322–326 is a substrate binding site; sequence EPAAG.

Belongs to the class-II aminoacyl-tRNA synthetase family. In terms of assembly, homodimer.

The protein localises to the cytoplasm. It carries out the reaction tRNA(Gly) + glycine + ATP = glycyl-tRNA(Gly) + AMP + diphosphate. Catalyzes the attachment of glycine to tRNA(Gly). This chain is Glycine--tRNA ligase, found in Corynebacterium glutamicum (strain ATCC 13032 / DSM 20300 / JCM 1318 / BCRC 11384 / CCUG 27702 / LMG 3730 / NBRC 12168 / NCIMB 10025 / NRRL B-2784 / 534).